The sequence spans 523 residues: Dynein regulatory complex subunit 3 (523 aa).

5 LRR repeats span residues 44-65, 66-87, 88-109, 110-131, and 132-153; these read DVLSLQLDFQNILRIDNLWQFE, NLKKLQLNNNIIERIEGLTNLI, HLVWLDLSFNNIEAIEGLDTLV, NLEDLSLSNNRISKVDSLDALV, and KLQVLSLGNNQISNMMNIIYLR. Residues 166–204 enclose the LRRCT domain; the sequence is NPVSEAEEYKMFIYAYLSDLVYLDFRRVDEQMREMAKMK. Coiled-coil stretches lie at residues 204–242 and 333–393; these read KHQYSIDELKHREAQLQMKLEEEQAKQEKLEEHKMAFVE and LNLN…LVGL.

This sequence belongs to the DRC3 family. As to quaternary structure, component of the nexin-dynein regulatory complex (N-DRC). Interacts with DRC1. Interacts with TCTE1/DRC5. Interacts with DRC7.

The protein localises to the cytoplasm. The protein resides in the cytoskeleton. It is found in the cilium axoneme. It localises to the cell projection. Its subcellular location is the cilium. The protein localises to the flagellum axoneme. The protein resides in the flagellum. Functionally, component of the nexin-dynein regulatory complex (N-DRC) a key regulator of ciliary/flagellar motility which maintains the alignment and integrity of the distal axoneme and regulates microtubule sliding in motile axonemes. The protein is Dynein regulatory complex subunit 3 (Drc3) of Mus musculus (Mouse).